The sequence spans 931 residues: Protocadherin gamma-A5 (931 aa).

The N-terminal stretch at 1 to 29 (MASPPRGWGCGELLLPFMLLGTLCEPGSG) is a signal peptide. Cadherin domains follow at residues 30–133 (QIRY…FPRF), 134–242 (RDEE…APLF), 243–347 (TPSE…APEV), 348–452 (ILTS…PPNF), 453–562 (PQAS…TPEI), and 570–683 (DGST…TPID). Residues 30–692 (QIRYSMPEEL…DPEDLDLTLY (663 aa)) lie on the Extracellular side of the membrane. 2 N-linked (GlcNAc...) asparagine glycosylation sites follow: asparagine 419 and asparagine 545. A helical transmembrane segment spans residues 693 to 713 (LVVAVAAVSCVFLAFVIVLLV). Residues 714–931 (LRLRRWHKSR…KKKSGKKEKK (218 aa)) are Cytoplasmic-facing. Disordered regions lie at residues 800 to 840 (NKEE…WPNN) and 901 to 931 (ATLT…KEKK). Positions 809–840 (APPNTDWRFSQAQRPGTSGSQNGDDTGTWPNN) are enriched in polar residues. Residues 921 to 931 (NKKKSGKKEKK) are compositionally biased toward basic residues.

The protein resides in the cell membrane. In terms of biological role, potential calcium-dependent cell-adhesion protein. May be involved in the establishment and maintenance of specific neuronal connections in the brain. This chain is Protocadherin gamma-A5 (PCDHGA5), found in Homo sapiens (Human).